Consider the following 658-residue polypeptide: Cysteine-rich receptor-like protein kinase 36 (658 aa).

The first 26 residues, 1 to 26 (MERSNLFHIPCFLLLFLLFNINGVHT), serve as a signal peptide directing secretion. Gnk2-homologous domains lie at 27–128 (TFVC…NIHR) and 139–246 (NVPH…DYRF). Residues 27 to 281 (TFVCGDEDFS…KKGRMFQPWS (255 aa)) lie on the Extracellular side of the membrane. N-linked (GlcNAc...) asparagine glycosylation is found at Asn38, Asn64, Asn116, Asn150, and Asn163. A helical membrane pass occupies residues 282 to 302 (VVVVVFPTGINLAVFVAFVLA). Residues 303-658 (YRRMRRRIYT…EVSITVLYPR (356 aa)) lie on the Cytoplasmic side of the membrane. Residues 340-612 (FSLENKLGQG…ITWLARDGTF (273 aa)) enclose the Protein kinase domain. ATP contacts are provided by residues 346-354 (LGQGGFGSV) and Lys368. A Phosphotyrosine modification is found at Tyr413. The Proton acceptor role is filled by Asp465. Phosphoserine is present on Ser469. Thr505 bears the Phosphothreonine mark. Tyr513 carries the post-translational modification Phosphotyrosine.

The protein belongs to the protein kinase superfamily. Ser/Thr protein kinase family. CRK subfamily. Interacts with CRK45. In terms of processing, autophosphorylated.

Its subcellular location is the cell membrane. The enzyme catalyses L-seryl-[protein] + ATP = O-phospho-L-seryl-[protein] + ADP + H(+). It catalyses the reaction L-threonyl-[protein] + ATP = O-phospho-L-threonyl-[protein] + ADP + H(+). Forms a complex with CRK45 that may negatively control abscisic acid (ABA) and osmotic stress signal transduction. Can phosphorylate CRK45 in vitro. The polypeptide is Cysteine-rich receptor-like protein kinase 36 (Arabidopsis thaliana (Mouse-ear cress)).